A 240-amino-acid polypeptide reads, in one-letter code: 14-3-3 protein 3 (240 aa).

It belongs to the 14-3-3 family. Interacts with coactosin. Interacts with ACTO/actophorin.

It localises to the cytoplasm. Its subcellular location is the cell projection. The protein localises to the phagocytic cup. In terms of biological role, adapter protein which is required for phagocytosis and motility, probably by regulating actin cytoskeleton dynamics. During phagocytosis, plays a role in the initiation and/or formation of the phagocytic cup and is involved in the recruitment of the actin binding protein coactosin to the phagocytic cup. The protein is 14-3-3 protein 3 of Entamoeba histolytica (strain ATCC 30459 / HM-1:IMSS / ABRM).